Here is a 356-residue protein sequence, read N- to C-terminus: Carminomycin 4-O-methyltransferase DauK (356 aa).

An S-adenosyl-L-methionine-binding site is contributed by arginine 153. Residue aspartate 163 coordinates substrate. Residues glycine 187, glutamate 210, 237-238, and serine 252 contribute to the S-adenosyl-L-methionine site; that span reads DF. 2 residues coordinate substrate: asparagine 257 and arginine 303.

Belongs to the class I-like SAM-binding methyltransferase superfamily. Cation-independent O-methyltransferase family. Homodimer and homotetramer in equilibrium.

It catalyses the reaction carminomycin + S-adenosyl-L-methionine = daunorubicin + S-adenosyl-L-homocysteine + H(+). Its pathway is antibiotic biosynthesis; daunorubicin biosynthesis. It functions in the pathway antibiotic biosynthesis; carminomycin biosynthesis. Its activity is regulated as follows. Strongly inhibited by S-adenosyl-L-homocysteine and weakly by adenine and methionine. Its function is as follows. Involved in the biosynthesis of the anthracyclines carminomycin and daunorubicin (daunomycin) which are aromatic polyketide antibiotics that exhibit high cytotoxicity and are widely applied in the chemotherapy of a variety of cancers. In vivo, catalyzes the transfer of a methyl group from S-adenosyl-L-methionine to the 4-O-position of carminomycin to form daunorubicin. In vitro, it also methylates the anthracyclines rhodomycin D (10-carbomethoxy-13-deoxycarminomycin), 10-carboxy-13-deoxycarminomycin, 13-deoxy-carminomycin and 13-dihydrocarminomycin at the 4-hydroxyl position. In Streptomyces sp. (strain C5), this protein is Carminomycin 4-O-methyltransferase DauK (dauK).